The chain runs to 260 residues: Hydroxyethylthiazole kinase 1 (260 aa).

Met-39 lines the substrate pocket. The ATP site is built by Arg-115 and Thr-160. Gly-187 contacts substrate.

It belongs to the Thz kinase family. Mg(2+) serves as cofactor.

It catalyses the reaction 5-(2-hydroxyethyl)-4-methylthiazole + ATP = 4-methyl-5-(2-phosphooxyethyl)-thiazole + ADP + H(+). It participates in cofactor biosynthesis; thiamine diphosphate biosynthesis; 4-methyl-5-(2-phosphoethyl)-thiazole from 5-(2-hydroxyethyl)-4-methylthiazole: step 1/1. Its function is as follows. Catalyzes the phosphorylation of the hydroxyl group of 4-methyl-5-beta-hydroxyethylthiazole (THZ). This chain is Hydroxyethylthiazole kinase 1, found in Streptococcus pneumoniae serotype 2 (strain D39 / NCTC 7466).